The chain runs to 741 residues: 1,4-alpha-glucan branching enzyme GlgB (741 aa).

Asp420 acts as the Nucleophile in catalysis. The active-site Proton donor is Glu473.

Belongs to the glycosyl hydrolase 13 family. GlgB subfamily. In terms of assembly, monomer.

It catalyses the reaction Transfers a segment of a (1-&gt;4)-alpha-D-glucan chain to a primary hydroxy group in a similar glucan chain.. The protein operates within glycan biosynthesis; glycogen biosynthesis. In terms of biological role, catalyzes the formation of the alpha-1,6-glucosidic linkages in glycogen by scission of a 1,4-alpha-linked oligosaccharide from growing alpha-1,4-glucan chains and the subsequent attachment of the oligosaccharide to the alpha-1,6 position. The sequence is that of 1,4-alpha-glucan branching enzyme GlgB from Pseudomonas syringae pv. syringae (strain B728a).